The chain runs to 138 residues: Brain natriuretic peptide (138 aa).

An N-terminal signal peptide occupies residues 1–22; sequence MRLSSMWLCSLLLILKLQLSST. Disordered regions lie at residues 50 to 84 and 99 to 138; these read EQMAVDQSAPGQRDLLDSLSTEDAGDGPQPDAGLD and SVRNDSSRRSSGCFGRRMDRIGSMSSLGCNTVGRYNPKQR. Cys111 and Cys127 are disulfide-bonded.

Belongs to the natriuretic peptide family.

The protein localises to the secreted. Functionally, cardiac hormone which may function as a paracrine antifibrotic factor in the heart. Also plays a key role in cardiovascular homeostasis through natriuresis, diuresis, vasorelaxation, and inhibition of renin and aldosterone secretion. The sequence is that of Brain natriuretic peptide (nppb) from Oreochromis mossambicus (Mozambique tilapia).